The primary structure comprises 1050 residues: Probable efflux pump membrane transporter TtgB (1050 aa).

A run of 12 helical transmembrane segments spans residues 10-30, 339-359, 370-390, 393-413, 440-460, 472-492, 539-559, 871-891, 893-913, 923-943, 972-992, and 1004-1024; these read IFAW…ILKL, GVIH…YLFL, MTVP…GFSI, LTMF…IVVV, GALV…AFFG, ITIV…TPAL, VPFL…FARI, MPAL…ALYE, WSIP…ALIA, VYFL…AILI, IIMT…ASGA, and VIGG…LFFV.

Belongs to the resistance-nodulation-cell division (RND) (TC 2.A.6) family.

Its subcellular location is the cell inner membrane. In terms of biological role, probable membrane transporter component of the TtgABC efflux pump with unknown specificity. In Pseudomonas putida (strain ATCC 47054 / DSM 6125 / CFBP 8728 / NCIMB 11950 / KT2440), this protein is Probable efflux pump membrane transporter TtgB (ttgB).